The chain runs to 969 residues: RNA polymerase-associated protein RapA (969 aa).

The region spanning 164–334 (EVGRRHAPRV…FARLRLLDPD (171 aa)) is the Helicase ATP-binding domain. Position 177 to 184 (177 to 184 (DEVGLGKT)) interacts with ATP. The DEAH box motif lies at 280-283 (DEAH). Residues 492–679 (RVNWLIEKIQ…ESAKLNQSLK (188 aa)) form the Helicase C-terminal domain.

It belongs to the SNF2/RAD54 helicase family. RapA subfamily. As to quaternary structure, interacts with the RNAP. Has a higher affinity for the core RNAP than for the holoenzyme. Its ATPase activity is stimulated by binding to RNAP.

Functionally, transcription regulator that activates transcription by stimulating RNA polymerase (RNAP) recycling in case of stress conditions such as supercoiled DNA or high salt concentrations. Probably acts by releasing the RNAP, when it is trapped or immobilized on tightly supercoiled DNA. Does not activate transcription on linear DNA. Probably not involved in DNA repair. The polypeptide is RNA polymerase-associated protein RapA (Vibrio atlanticus (strain LGP32) (Vibrio splendidus (strain Mel32))).